Here is a 158-residue protein sequence, read N- to C-terminus: Tryptophan-rich sensory protein (158 aa).

Helical transmembrane passes span 5 to 25 (WALF…GALL), 44 to 65 (WVFP…MRVA), 73 to 93 (ALAF…VFFG), 97 to 119 (MATA…WAFF), and 124 to 144 (WAGV…GLNF).

Belongs to the TspO/BZRP family. In terms of assembly, homodimer.

It is found in the membrane. The protein resides in the cell inner membrane. Its function is as follows. May play a role in the transmembrane transport of tetrapyrroles and similar compounds, and thereby contribute to the regulation of tetrapyrrole biosynthesis. Binds tetrapyrroles and promotes the photooxidative degradation of protoporphyrin IX. Binds protoporphyrin IX, hemin, and coproporphyrin III, but does not bind delta-aminolevulinic acid. Can bind bilirubin, curcumin, gossypol, retinoic acid, cholesterol and the benzodiazepine receptor agonist PK-11195 (in vitro). Plays a role in the response to low oxygen levels and in the regulation of the biosynthesis of photosynthetic pigments. This chain is Tryptophan-rich sensory protein, found in Cereibacter sphaeroides (Rhodobacter sphaeroides).